Reading from the N-terminus, the 324-residue chain is tRNA U34 carboxymethyltransferase (324 aa).

Carboxy-S-adenosyl-L-methionine contacts are provided by residues Lys-92, Trp-106, Lys-111, Gly-131, 181–182, Met-197, Tyr-201, and Arg-316; that span reads LE.

It belongs to the class I-like SAM-binding methyltransferase superfamily. CmoB family. Homotetramer.

The catalysed reaction is carboxy-S-adenosyl-L-methionine + 5-hydroxyuridine(34) in tRNA = 5-carboxymethoxyuridine(34) in tRNA + S-adenosyl-L-homocysteine + H(+). In terms of biological role, catalyzes carboxymethyl transfer from carboxy-S-adenosyl-L-methionine (Cx-SAM) to 5-hydroxyuridine (ho5U) to form 5-carboxymethoxyuridine (cmo5U) at position 34 in tRNAs. This is tRNA U34 carboxymethyltransferase from Syntrophotalea carbinolica (strain DSM 2380 / NBRC 103641 / GraBd1) (Pelobacter carbinolicus).